A 205-amino-acid chain; its full sequence is Cryptic plasmid protein C (205 aa).

Positions 142-205 (THGYSDPDDP…RAGNAGKGRF (64 aa)) are disordered. Residues 155–174 (QSMTQAKDLPRNTQEAAQSI) are compositionally biased toward polar residues. Basic residues predominate over residues 189–205 (QAKKPRRRAGNAGKGRF).

This chain is Cryptic plasmid protein C (cppC), found in Neisseria gonorrhoeae.